Consider the following 408-residue polypeptide: 3-ketoacyl-CoA thiolase B, peroxisomal (408 aa).

The active-site Acyl-thioester intermediate is Cys112. Catalysis depends on proton acceptor residues His366 and Cys394.

Belongs to the thiolase-like superfamily. Thiolase family. Homodimer.

The protein resides in the peroxisome. It catalyses the reaction an acyl-CoA + acetyl-CoA = a 3-oxoacyl-CoA + CoA. The protein operates within lipid metabolism; fatty acid metabolism. The protein is 3-ketoacyl-CoA thiolase B, peroxisomal of Candida tropicalis (Yeast).